The following is a 400-amino-acid chain: Vitamin K-dependent protein Z (400 aa).

Residues 1–23 (MAGCVPLLQGLVLVLALHRVEPS) form the signal peptide. The propeptide occupies 24 to 40 (VFLPASKANDVLVRWKR). The 46-residue stretch at 41–86 (AGSYLLEELFEGNLEKECYEEICVYEEAREVFENEVVTDEFWRRYK) folds into the Gla domain. A 4-carboxyglutamate mark is found at Glu-47, Glu-48, Glu-51, Glu-55, Glu-57, Glu-60, Glu-61, Glu-66, Glu-67, Glu-70, Glu-73, Glu-75, and Glu-80. Cys-58 and Cys-63 are joined by a disulfide. 2 EGF-like domains span residues 87–123 (GGSP…SNCE) and 125–166 (AKNE…KQCV). Disulfide bonds link Cys-91–Cys-102, Cys-96–Cys-111, Cys-113–Cys-122, Cys-129–Cys-141, Cys-137–Cys-150, Cys-152–Cys-165, and Cys-203–Cys-219. Ser-93 is a glycosylation site (O-linked (Glc...) serine). Residue Asn-99 is glycosylated (N-linked (GlcNAc...) asparagine). Asp-104 carries the post-translational modification (3R)-3-hydroxyaspartate. The region spanning 175–400 (VLTSEKRAPD…YSLWFKQIMN (226 aa)) is the Peptidase S1 domain. 4 N-linked (GlcNAc...) asparagine glycosylation sites follow: Asn-225, Asn-233, Asn-306, and Asn-332. A disulfide bridge connects residues Cys-327 and Cys-341.

The protein belongs to the peptidase S1 family. Interacts with SERPINA10. Post-translationally, the iron and 2-oxoglutarate dependent 3-hydroxylation of aspartate and asparagine is (R) stereospecific within EGF domains. As to expression, plasma.

It is found in the secreted. Functionally, appears to assist hemostasis by binding thrombin and promoting its association with phospholipid vesicles. Inhibits activity of the coagulation protease factor Xa in the presence of SERPINA10, calcium and phospholipids. The protein is Vitamin K-dependent protein Z (PROZ) of Homo sapiens (Human).